Here is an 876-residue protein sequence, read N- to C-terminus: MSQMNVEQFASELGVLPTVLLEQLQAAGVRKHMTEDSLTEKDKTQLLEYLRKIHGAKEEKGRISLPRRQTSEIKKADSTGKPRSIQVEVRKKRVFVKGVDLPVERKTAEIPAPAAPSVPPVRTPVIDAAQQALRQEEARRQAELIARQAAELREKRLRERPPVVEIKEPEEPAPPFVPAAPVAGPEAVPVAPETPSAAPGETVAAVEAEAAPSQPASTEGTLHKPAVKPEEKADKKKKPAKQVVWKEEKVEKRGLKTRGDLSGAKGGWRARKDKHGRTEEPAPHAFSAPTEPVVHEVLVPETISVGALAQKMSIKAAEVIKALMKMGNMVTINQMLDQETAMIVVEELGHVAKYAALDSPESFLADTEIAPSELKMEARAPVVTVMGHVDHGKTSLLDYIRRTRVASGEAGGITQHIGAYHVETERGMVTFLDTPGHEAFTAMRARGAKVTDLVILVVAADDGVMPQTVEAIHHAKAGKVPIVVAMTKIDKPEANPERIRQELVTQEVVPEDWGGETMFVEVSAKTGQGIDDLLESVLLQAEVLELKAPKDAPAKGIVIESRLDKGRGPVATMLVQSGTLKRGDILLAGAAYGRVRAMLDESGKQVEQAGPSIPVEIQGLSEVPVAGESVVALTDERKAREIALFRQGKFRDVKLAKQQAAKLENVFEQRGEVKVLSLIIKADVQGSYEALTHALQQLSTDEVKVNIIHSGVGAITESDINLALASKAVVIGFNSRADAVARKLINSAGVDVRYYSIIYEAVDEIKAALSGMMAPERKENITGLLEIREVFRISKVGAVAGCLVQEGFVRRGSLVRVIRNGQVIHTGELDSLKRFKDDVKEVRAGFECGLSLKNFNDIQVGDQLETYEIQVIARTL.

The tract at residues 164–288 is disordered; it reads VEIKEPEEPA…EEPAPHAFSA (125 aa). Residues 179–219 show a composition bias toward low complexity; that stretch reads AAPVAGPEAVPVAPETPSAAPGETVAAVEAEAAPSQPASTE. Residues 244-259 show a composition bias toward basic and acidic residues; that stretch reads VWKEEKVEKRGLKTRG. A tr-type G domain is found at 378–547; that stretch reads ARAPVVTVMG…LLQAEVLELK (170 aa). A G1 region spans residues 387–394; sequence GHVDHGKT. Position 387–394 (387–394) interacts with GTP; it reads GHVDHGKT. Positions 412–416 are G2; sequence GITQH. The segment at 433–436 is G3; that stretch reads DTPG. Residues 433–437 and 487–490 each bind GTP; these read DTPGH and TKID. A G4 region spans residues 487–490; that stretch reads TKID. Residues 523-525 are G5; that stretch reads SAK.

The protein belongs to the TRAFAC class translation factor GTPase superfamily. Classic translation factor GTPase family. IF-2 subfamily.

The protein localises to the cytoplasm. Its function is as follows. One of the essential components for the initiation of protein synthesis. Protects formylmethionyl-tRNA from spontaneous hydrolysis and promotes its binding to the 30S ribosomal subunits. Also involved in the hydrolysis of GTP during the formation of the 70S ribosomal complex. The polypeptide is Translation initiation factor IF-2 (Nitrosospira multiformis (strain ATCC 25196 / NCIMB 11849 / C 71)).